The chain runs to 620 residues: uncharacterized protein (620 aa).

It belongs to the chlamydial CPn_0512/CT_425/TC_0708 family.

This is an uncharacterized protein from Chlamydia pneumoniae (Chlamydophila pneumoniae).